The primary structure comprises 289 residues: Pyridoxal kinase PdxY (289 aa).

Residues Ser-9 and 44-45 contribute to the substrate site; that span reads TQ. The ATP site is built by Asp-112, Val-144, Glu-149, and Lys-182. A substrate-binding site is contributed by Asp-221.

The protein belongs to the pyridoxine kinase family. PdxY subfamily. In terms of assembly, homodimer. The cofactor is Mg(2+).

It catalyses the reaction pyridoxal + ATP = pyridoxal 5'-phosphate + ADP + H(+). The protein operates within cofactor metabolism; pyridoxal 5'-phosphate salvage; pyridoxal 5'-phosphate from pyridoxal: step 1/1. Functionally, pyridoxal kinase involved in the salvage pathway of pyridoxal 5'-phosphate (PLP). Catalyzes the phosphorylation of pyridoxal to PLP. This Vibrio campbellii (strain ATCC BAA-1116) protein is Pyridoxal kinase PdxY.